Here is a 698-residue protein sequence, read N- to C-terminus: DNA-directed RNA polymerase subunit beta' (698 aa).

Zn(2+)-binding residues include Cys69, Cys71, Cys89, and Cys92. Mg(2+) is bound by residues Asp509, Asp511, and Asp513.

Belongs to the RNA polymerase beta' chain family. RpoC1 subfamily. In plastids the minimal PEP RNA polymerase catalytic core is composed of four subunits: alpha, beta, beta', and beta''. When a (nuclear-encoded) sigma factor is associated with the core the holoenzyme is formed, which can initiate transcription. Requires Mg(2+) as cofactor. The cofactor is Zn(2+).

Its subcellular location is the plastid. It is found in the chloroplast. It carries out the reaction RNA(n) + a ribonucleoside 5'-triphosphate = RNA(n+1) + diphosphate. DNA-dependent RNA polymerase catalyzes the transcription of DNA into RNA using the four ribonucleoside triphosphates as substrates. This is DNA-directed RNA polymerase subunit beta' from Cryptomeria japonica (Japanese cedar).